Here is a 686-residue protein sequence, read N- to C-terminus: Translation initiation factor IF-2 (686 aa).

The tract at residues 35-99 is disordered; sequence MSTVEDETAE…EHGQKDTDRR (65 aa). The segment covering 50 to 68 has biased composition (basic and acidic residues); the sequence is LQEEDKPEEKISKKEPDKK. A compositionally biased stretch (basic residues) spans 69-79; it reads DRKKTKGKKQM. Over residues 87–99 the composition is skewed to basic and acidic residues; it reads EGTEHGQKDTDRR. The tr-type G domain maps to 186-355; it reads LRPPIVTVMG…LLVAEMEELK (170 aa). The G1 stretch occupies residues 195–202; sequence GHVDHGKT. 195 to 202 serves as a coordination point for GTP; it reads GHVDHGKT. The segment at 220 to 224 is G2; sequence GITQH. Residues 241 to 244 form a G3 region; the sequence is DTPG. GTP is bound by residues 241-245 and 295-298; these read DTPGH and NKVD. The tract at residues 295–298 is G4; that stretch reads NKVD. The segment at 331 to 333 is G5; the sequence is SAL.

This sequence belongs to the TRAFAC class translation factor GTPase superfamily. Classic translation factor GTPase family. IF-2 subfamily.

It localises to the cytoplasm. Its function is as follows. One of the essential components for the initiation of protein synthesis. Protects formylmethionyl-tRNA from spontaneous hydrolysis and promotes its binding to the 30S ribosomal subunits. Also involved in the hydrolysis of GTP during the formation of the 70S ribosomal complex. The protein is Translation initiation factor IF-2 of Halothermothrix orenii (strain H 168 / OCM 544 / DSM 9562).